A 309-amino-acid chain; its full sequence is Coproporphyrin III ferrochelatase (309 aa).

Residues Y12, T14, R29, 45 to 46 (RY), S53, and Y124 contribute to the Fe-coproporphyrin III site. 2 residues coordinate Fe(2+): H182 and E263.

Belongs to the ferrochelatase family. Monomer.

The protein localises to the cytoplasm. The enzyme catalyses Fe-coproporphyrin III + 2 H(+) = coproporphyrin III + Fe(2+). It participates in porphyrin-containing compound metabolism; protoheme biosynthesis. Functionally, involved in coproporphyrin-dependent heme b biosynthesis. Catalyzes the insertion of ferrous iron into coproporphyrin III to form Fe-coproporphyrin III. The protein is Coproporphyrin III ferrochelatase of Listeria monocytogenes serovar 1/2a (strain ATCC BAA-679 / EGD-e).